Consider the following 250-residue polypeptide: MAVTKLVLVRHGESQWNNENRFTGWYDVDLSDKGRTEAKAAGQLLKKEGFTFDFAYTSVLKRAIHTLWNILDEVDQVWLPVEKSWRLNERHYGALQGLDKAETANKYGDEQVKQWRRGFAVTPPELDRADERFPGHDPRYASLTAEQLPTTESLALTIDRVLPYWNESILPRMKSGEKVIIAAHGNSLRALVKYLDNMSEEEILELNIPTGVPLVYEFDENFKPIKHYYLGDADEIAAKAAAVANQGKAK.

Substrate-binding positions include 10-17 (RHGESQWN), 23-24 (TG), arginine 62, 89-92 (ERHY), lysine 100, 116-117 (RR), and 185-186 (GN). Histidine 11 serves as the catalytic Tele-phosphohistidine intermediate. Glutamate 89 functions as the Proton donor/acceptor in the catalytic mechanism.

The protein belongs to the phosphoglycerate mutase family. BPG-dependent PGAM subfamily. In terms of assembly, homodimer.

The enzyme catalyses (2R)-2-phosphoglycerate = (2R)-3-phosphoglycerate. Its pathway is carbohydrate degradation; glycolysis; pyruvate from D-glyceraldehyde 3-phosphate: step 3/5. Functionally, catalyzes the interconversion of 2-phosphoglycerate and 3-phosphoglycerate. The polypeptide is 2,3-bisphosphoglycerate-dependent phosphoglycerate mutase (Erwinia tasmaniensis (strain DSM 17950 / CFBP 7177 / CIP 109463 / NCPPB 4357 / Et1/99)).